Reading from the N-terminus, the 165-residue chain is Glycine cleavage system H protein, mitochondrial (165 aa).

In terms of domain architecture, Lipoyl-binding spans 57–139; that stretch reads NAIVGISSYA…YEKGWLFKVD (83 aa). Residue Lys98 is modified to N6-lipoyllysine.

Belongs to the GcvH family. As to quaternary structure, the glycine cleavage system is composed of four proteins: P, T, L and H. It depends on (R)-lipoate as a cofactor.

Its subcellular location is the mitochondrion. Its function is as follows. The glycine cleavage system catalyzes the degradation of glycine. The H protein shuttles the methylamine group of glycine from the P protein to the T protein. The polypeptide is Glycine cleavage system H protein, mitochondrial (ppl) (Drosophila melanogaster (Fruit fly)).